We begin with the raw amino-acid sequence, 432 residues long: Golgin subfamily A member 6-like protein 9 (432 aa).

Residues 1–11 show a composition bias toward pro residues; sequence MWPQPRLPPHP. Disordered stretches follow at residues 1 to 77 and 349 to 411; these read MWPQ…YGEG and KELE…AGGA. The span at 51 to 62 shows a compositional bias: polar residues; the sequence is NGSSPDTFTSGG. Residues 157–354 adopt a coiled-coil conformation; the sequence is SKMEQLQDET…EQQVKELEKS (198 aa). Residues 349–362 are compositionally biased toward basic and acidic residues; the sequence is KELEKSGGAEEPRG. A compositionally biased stretch (low complexity) spans 366-381; the sequence is AAAARPVAGAPVPQGA.

Belongs to the GOLGA6 family.

The sequence is that of Golgin subfamily A member 6-like protein 9 from Homo sapiens (Human).